Consider the following 330-residue polypeptide: Anthranilate phosphoribosyltransferase (330 aa).

5-phospho-alpha-D-ribose 1-diphosphate contacts are provided by residues glycine 75, 78 to 79 (GD), threonine 83, 85 to 88 (NVST), 103 to 111 (KHGNRAASS), and alanine 115. Residue glycine 75 participates in anthranilate binding. Residue serine 87 participates in Mg(2+) binding. Residue asparagine 106 coordinates anthranilate. An anthranilate-binding site is contributed by arginine 161. Positions 220 and 221 each coordinate Mg(2+).

Belongs to the anthranilate phosphoribosyltransferase family. As to quaternary structure, homodimer. It depends on Mg(2+) as a cofactor.

It catalyses the reaction N-(5-phospho-beta-D-ribosyl)anthranilate + diphosphate = 5-phospho-alpha-D-ribose 1-diphosphate + anthranilate. It participates in amino-acid biosynthesis; L-tryptophan biosynthesis; L-tryptophan from chorismate: step 2/5. Its function is as follows. Catalyzes the transfer of the phosphoribosyl group of 5-phosphorylribose-1-pyrophosphate (PRPP) to anthranilate to yield N-(5'-phosphoribosyl)-anthranilate (PRA). The polypeptide is Anthranilate phosphoribosyltransferase (Erythrobacter litoralis (strain HTCC2594)).